The chain runs to 467 residues: Asparagine--tRNA ligase (467 aa).

The protein belongs to the class-II aminoacyl-tRNA synthetase family. Homodimer.

Its subcellular location is the cytoplasm. It catalyses the reaction tRNA(Asn) + L-asparagine + ATP = L-asparaginyl-tRNA(Asn) + AMP + diphosphate + H(+). In Haemophilus influenzae (strain PittEE), this protein is Asparagine--tRNA ligase.